An 897-amino-acid chain; its full sequence is Serine/threonine-protein kinase ATG1 (897 aa).

Residues 24–325 (YTAEKEIGKG…FEEFFANKVV (302 aa)) enclose the Protein kinase domain. Residues 30–38 (IGKGSFATV) and lysine 54 each bind ATP. Serine 34 is subject to Phosphoserine. Threonine 129 carries the post-translational modification Phosphothreonine. The active-site Proton acceptor is aspartate 172. Phosphothreonine; by autocatalysis is present on threonine 226. 3 positions are modified to phosphoserine: serine 304, serine 365, and serine 390. The LIR signature appears at 429 to 432 (YVVV). The interval 490–509 (LLRATSSSSGGSDGSRRPSL) is disordered. Phosphoserine; by PKA occurs at positions 508 and 515. 3 positions are modified to phosphoserine: serine 533, serine 551, and serine 552. Threonine 590 bears the Phosphothreonine mark. Phosphoserine is present on residues serine 621, serine 635, serine 638, serine 647, serine 677, serine 680, serine 683, serine 769, and serine 783. A required for Cvt trafficking region spans residues 880 to 886 (DSIANRL).

Belongs to the protein kinase superfamily. Ser/Thr protein kinase family. APG1/unc-51/ULK1 subfamily. As to quaternary structure, homodimer. Dimerization requires the presence of ATG13. Forms a ternary complex with ATG13 and ATG17. Also interacts with ATG11. Post-translationally, autophosphorylated at Thr-226 and Ser-390. The phosphorylation state may play a role in the induction of protein degradation upon starvation. Phosphorylation at Thr-226 within the activation loop is required for protein kinase activity whereas phosphorylation at Ser-34 leads to inhibition of kinase activity. Phosphorylation of Ser-508 and Ser-515 by PKA is required to induce autophagy but not for kinase activity.

It is found in the cytoplasm. The protein localises to the preautophagosomal structure membrane. The enzyme catalyses L-seryl-[protein] + ATP = O-phospho-L-seryl-[protein] + ADP + H(+). It catalyses the reaction L-threonyl-[protein] + ATP = O-phospho-L-threonyl-[protein] + ADP + H(+). With respect to regulation, activated by hypophosphorylated form of ATG13 (present in nitrogen starvation conditions). Also activated by autophopsphorylation of Thr-226 and inhibited by phosphorylation of Ser-34. Serine/threonine protein kinase involved in the cytoplasm to vacuole transport (Cvt) and found to be essential in autophagy, where it is required for the formation of autophagosomes. Involved in the clearance of protein aggregates which cannot be efficiently cleared by the proteasome. Required for selective autophagic degradation of the nucleus (nucleophagy) as well as for mitophagy which contributes to regulate mitochondrial quantity and quality by eliminating the mitochondria to a basal level to fulfill cellular energy requirements and preventing excess ROS production. Also involved in endoplasmic reticulum-specific autophagic process, in selective removal of ER-associated degradation (ERAD) substrates. Plays a key role in ATG9 and ATG23 cycling through the pre-autophagosomal structure and is necessary to promote ATG18 binding to ATG9 through phosphorylation of ATG9. Catalyzes phosphorylation of ATG4, decreasing the interaction between ATG4 and ATG8 and impairing deconjugation of PE-conjugated forms of ATG8. Finally, ATG1 is also required for the maintenance of cell viability under starvation and for glycogen storage during stationary phase. Plays a role in genome stability through suppression of abnormal mitosis under starvation, and in regulation of filamentous growth. The protein is Serine/threonine-protein kinase ATG1 of Saccharomyces cerevisiae (strain YJM789) (Baker's yeast).